The primary structure comprises 1162 residues: DNA-directed RNA polymerase subunit beta (1162 aa).

This sequence belongs to the RNA polymerase beta chain family. In terms of assembly, the RNAP catalytic core consists of 2 alpha, 1 beta, 1 beta' and 1 omega subunit. When a sigma factor is associated with the core the holoenzyme is formed, which can initiate transcription.

It catalyses the reaction RNA(n) + a ribonucleoside 5'-triphosphate = RNA(n+1) + diphosphate. DNA-dependent RNA polymerase catalyzes the transcription of DNA into RNA using the four ribonucleoside triphosphates as substrates. This chain is DNA-directed RNA polymerase subunit beta, found in Clavibacter michiganensis subsp. michiganensis (strain NCPPB 382).